A 445-amino-acid chain; its full sequence is Tubulin beta chain (445 aa).

GTP-binding residues include Q11, E69, S138, G142, T143, G144, N204, and N226. E69 provides a ligand contact to Mg(2+). Positions 426–445 are disordered; it reads QDATAEEEGEFEEEEGDVEA. The segment covering 429–445 has biased composition (acidic residues); the sequence is TAEEEGEFEEEEGDVEA.

The protein belongs to the tubulin family. As to quaternary structure, dimer of alpha and beta chains. A typical microtubule is a hollow water-filled tube with an outer diameter of 25 nm and an inner diameter of 15 nM. Alpha-beta heterodimers associate head-to-tail to form protofilaments running lengthwise along the microtubule wall with the beta-tubulin subunit facing the microtubule plus end conferring a structural polarity. Microtubules usually have 13 protofilaments but different protofilament numbers can be found in some organisms and specialized cells. Interacts with DCX/apicortin; the interaction stabilizes microtubule assembly. Mg(2+) serves as cofactor.

It is found in the cytoplasm. The protein localises to the cytoskeleton. In terms of biological role, tubulin is the major constituent of microtubules, a cylinder consisting of laterally associated linear protofilaments composed of alpha- and beta-tubulin heterodimers. Microtubules grow by the addition of GTP-tubulin dimers to the microtubule end, where a stabilizing cap forms. Below the cap, tubulin dimers are in GDP-bound state, owing to GTPase activity of alpha-tubulin. The sequence is that of Tubulin beta chain from Plasmodium falciparum.